Consider the following 361-residue polypeptide: Serine/threonine-protein kinase SAPK9 (361 aa).

The Protein kinase domain maps to 22–278 (YELVKEIGSG…MPEIKNHPWF (257 aa)). Residues 28–36 (IGSGNFGVA) and K51 contribute to the ATP site. The Proton acceptor role is filled by D141.

The protein belongs to the protein kinase superfamily. Ser/Thr protein kinase family. In terms of assembly, interacts with BZIP46. May be phosphorylated. Expressed in leaf sheaths and roots. Expressed in shoots of young seedlings.

The protein localises to the cytoplasm. It localises to the nucleus. The catalysed reaction is L-seryl-[protein] + ATP = O-phospho-L-seryl-[protein] + ADP + H(+). It carries out the reaction L-threonyl-[protein] + ATP = O-phospho-L-threonyl-[protein] + ADP + H(+). With respect to regulation, activated by hyperosmotic stress and abscisic acid (ABA). Its function is as follows. May play a role in signal transduction of hyperosmotic response. Can phosphorylate BZIP46 in vitro. The chain is Serine/threonine-protein kinase SAPK9 (SAPK9) from Oryza sativa subsp. japonica (Rice).